The following is a 532-amino-acid chain: Deoxyribodipyrimidine photo-lyase (532 aa).

Residues 1 to 57 (MDSKKRSHSTGGEAENMESQESKAKRKPLQKHQFSKSNVVQKEEKDKTEGEEKGAEG) form a disordered region. Basic residues predominate over residues 24-34 (AKRKPLQKHQF). Residues 41–55 (QKEEKDKTEGEEKGA) are compositionally biased toward basic and acidic residues. One can recognise a Photolyase/cryptochrome alpha/beta domain in the interval 97–229 (QAFVYWMSRD…QVDAHNIVPC (133 aa)). A DNA-binding site is contributed by Arg322. Interaction with DNA regions lie at residues 368 to 376 (EAVVRRELA) and 442 to 443 (GF). FAD is bound at residue 468-470 (YLN).

The protein belongs to the DNA photolyase class-2 family. FAD serves as cofactor.

The enzyme catalyses cyclobutadipyrimidine (in DNA) = 2 pyrimidine residues (in DNA).. Involved in repair of UV radiation-induced DNA damage. Catalyzes the light-dependent monomerization (300-600 nm) of cyclobutyl pyrimidine dimers (in cis-syn configuration), which are formed between adjacent bases on the same DNA strand upon exposure to ultraviolet radiation. In Potorous tridactylus (Potoroo), this protein is Deoxyribodipyrimidine photo-lyase (PHR).